The primary structure comprises 132 residues: Large-conductance mechanosensitive channel (132 aa).

3 helical membrane passes run F8–G28, I30–V50, and G67–I87.

Belongs to the MscL family. Homopentamer.

It is found in the cell membrane. Channel that opens in response to stretch forces in the membrane lipid bilayer. May participate in the regulation of osmotic pressure changes within the cell. The polypeptide is Large-conductance mechanosensitive channel (Bacillus cytotoxicus (strain DSM 22905 / CIP 110041 / 391-98 / NVH 391-98)).